Here is a 438-residue protein sequence, read N- to C-terminus: Citrate synthase (438 aa).

Residues His-306 and Asp-364 contribute to the active site.

This sequence belongs to the citrate synthase family.

It carries out the reaction oxaloacetate + acetyl-CoA + H2O = citrate + CoA + H(+). It functions in the pathway carbohydrate metabolism; tricarboxylic acid cycle; isocitrate from oxaloacetate: step 1/2. The sequence is that of Citrate synthase (gltA) from Bartonella quintana (strain Toulouse) (Rochalimaea quintana).